The sequence spans 209 residues: Uridine kinase (209 aa).

12–19 lines the ATP pocket; that stretch reads GGSGSGKT.

The protein belongs to the uridine kinase family.

The protein resides in the cytoplasm. It carries out the reaction uridine + ATP = UMP + ADP + H(+). The enzyme catalyses cytidine + ATP = CMP + ADP + H(+). The protein operates within pyrimidine metabolism; CTP biosynthesis via salvage pathway; CTP from cytidine: step 1/3. Its pathway is pyrimidine metabolism; UMP biosynthesis via salvage pathway; UMP from uridine: step 1/1. The polypeptide is Uridine kinase (Listeria welshimeri serovar 6b (strain ATCC 35897 / DSM 20650 / CCUG 15529 / CIP 8149 / NCTC 11857 / SLCC 5334 / V8)).